Reading from the N-terminus, the 87-residue chain is DNA-directed RNA polymerase subunit omega (87 aa).

This sequence belongs to the RNA polymerase subunit omega family. In terms of assembly, the RNAP catalytic core consists of 2 alpha, 1 beta, 1 beta' and 1 omega subunit. When a sigma factor is associated with the core the holoenzyme is formed, which can initiate transcription.

The catalysed reaction is RNA(n) + a ribonucleoside 5'-triphosphate = RNA(n+1) + diphosphate. Functionally, promotes RNA polymerase assembly. Latches the N- and C-terminal regions of the beta' subunit thereby facilitating its interaction with the beta and alpha subunits. This Ectopseudomonas mendocina (strain ymp) (Pseudomonas mendocina) protein is DNA-directed RNA polymerase subunit omega.